Reading from the N-terminus, the 299-residue chain is 33 kDa chaperonin (299 aa).

2 cysteine pairs are disulfide-bonded: Cys234/Cys236 and Cys268/Cys271.

The protein belongs to the HSP33 family. Post-translationally, under oxidizing conditions two disulfide bonds are formed involving the reactive cysteines. Under reducing conditions zinc is bound to the reactive cysteines and the protein is inactive.

It localises to the cytoplasm. Redox regulated molecular chaperone. Protects both thermally unfolding and oxidatively damaged proteins from irreversible aggregation. Plays an important role in the bacterial defense system toward oxidative stress. This Pseudomonas putida (strain ATCC 700007 / DSM 6899 / JCM 31910 / BCRC 17059 / LMG 24140 / F1) protein is 33 kDa chaperonin.